Reading from the N-terminus, the 403-residue chain is Aspartic protease PEP1 (403 aa).

The signal sequence occupies residues 1–20 (MVQISQIGAVLAVCSTLTVA). A propeptide spans 21–67 (APTKGKARFNVPQVAVPMKAVHHPAVAYARALHKFGMKVPKAVSDAA) (activation peptide). One can recognise a Peptidase A1 domain in the interval 82 to 400 (YVTQVTVGQG…DTEGPRIGFA (319 aa)). Aspartate 98 is an active-site residue. Residues asparagine 159 and asparagine 270 are each glycosylated (N-linked (GlcNAc...) asparagine). The active site involves aspartate 293. A disulfide bridge links cysteine 329 with cysteine 361.

Belongs to the peptidase A1 family.

It localises to the secreted. The enzyme catalyses Hydrolysis of proteins with broad specificity. Generally favors hydrophobic residues in P1 and P1', but also accepts Lys in P1, which leads to activation of trypsinogen. Does not clot milk.. Functionally, secreted aspartic endopeptidase that allows assimilation of proteinaceous substrates. Can catalyze hydrolysis of the major structural proteins of basement membrane, elastin, collagen, and laminin. Thought to play a significant role in virulence. This Arthroderma benhamiae (strain ATCC MYA-4681 / CBS 112371) (Trichophyton mentagrophytes) protein is Aspartic protease PEP1 (PEP1).